The sequence spans 329 residues: DNA-directed RNA polymerase subunit alpha (329 aa).

Positions 1–235 are alpha N-terminal domain (alpha-NTD); that stretch reads MQGSVTEFLK…EQLDAFVDLR (235 aa). An alpha C-terminal domain (alpha-CTD) region spans residues 249 to 329; that stretch reads FDPILLRPVD…NWPPASIAED (81 aa).

It belongs to the RNA polymerase alpha chain family. In terms of assembly, homodimer. The RNAP catalytic core consists of 2 alpha, 1 beta, 1 beta' and 1 omega subunit. When a sigma factor is associated with the core the holoenzyme is formed, which can initiate transcription.

It carries out the reaction RNA(n) + a ribonucleoside 5'-triphosphate = RNA(n+1) + diphosphate. DNA-dependent RNA polymerase catalyzes the transcription of DNA into RNA using the four ribonucleoside triphosphates as substrates. This chain is DNA-directed RNA polymerase subunit alpha, found in Aliivibrio fischeri (strain ATCC 700601 / ES114) (Vibrio fischeri).